Consider the following 500-residue polypeptide: Cytochrome P450 2C11 (500 aa).

Residue C435 participates in heme binding.

It belongs to the cytochrome P450 family. The cofactor is heme. As to expression, liver and kidney; male-specific.

It is found in the endoplasmic reticulum membrane. The protein localises to the microsome membrane. It carries out the reaction an organic molecule + reduced [NADPH--hemoprotein reductase] + O2 = an alcohol + oxidized [NADPH--hemoprotein reductase] + H2O + H(+). The enzyme catalyses testosterone + reduced [NADPH--hemoprotein reductase] + O2 = 2alpha,17beta-dihydroxyandrost-4-en-3-one + oxidized [NADPH--hemoprotein reductase] + H2O + H(+). It catalyses the reaction testosterone + reduced [NADPH--hemoprotein reductase] + O2 = 16alpha,17beta-dihydroxyandrost-4-en-3-one + oxidized [NADPH--hemoprotein reductase] + H2O + H(+). The catalysed reaction is (5Z,8Z,11Z,14Z)-eicosatetraenoate + reduced [NADPH--hemoprotein reductase] + O2 = (8R,9S)-epoxy-(5Z,11Z,14Z)-eicosatrienoate + oxidized [NADPH--hemoprotein reductase] + H2O + H(+). It carries out the reaction (5Z,8Z,11Z,14Z)-eicosatetraenoate + reduced [NADPH--hemoprotein reductase] + O2 = (8S,9R)-epoxy-(5Z,11Z,14Z)-eicosatrienoate + oxidized [NADPH--hemoprotein reductase] + H2O + H(+). The enzyme catalyses (5Z,8Z,11Z,14Z)-eicosatetraenoate + reduced [NADPH--hemoprotein reductase] + O2 = (11R,12S)-epoxy-(5Z,8Z,14Z)-eicosatrienoate + oxidized [NADPH--hemoprotein reductase] + H2O + H(+). It catalyses the reaction (5Z,8Z,11Z,14Z)-eicosatetraenoate + reduced [NADPH--hemoprotein reductase] + O2 = (11S,12R)-epoxy-(5Z,8Z,14Z)-eicosatrienoate + oxidized [NADPH--hemoprotein reductase] + H2O + H(+). The catalysed reaction is (5Z,8Z,11Z,14Z)-eicosatetraenoate + reduced [NADPH--hemoprotein reductase] + O2 = (14R,15S)-epoxy-(5Z,8Z,11Z)-eicosatrienoate + oxidized [NADPH--hemoprotein reductase] + H2O + H(+). It carries out the reaction (5Z,8Z,11Z,14Z)-eicosatetraenoate + reduced [NADPH--hemoprotein reductase] + O2 = (14S,15R)-epoxy-(5Z,8Z,11Z)-eicosatrienoate + oxidized [NADPH--hemoprotein reductase] + H2O + H(+). The enzyme catalyses (5Z,8Z,11Z,14Z,17Z)-eicosapentaenoate + reduced [NADPH--hemoprotein reductase] + O2 = 8,9-epoxy-(5Z,11Z,14Z,17Z)-eicosatetraenoate + oxidized [NADPH--hemoprotein reductase] + H2O + H(+). It catalyses the reaction (5Z,8Z,11Z,14Z,17Z)-eicosapentaenoate + reduced [NADPH--hemoprotein reductase] + O2 = 11,12-epoxy-(5Z,8Z,14Z,17Z)-eicosatetraenoate + oxidized [NADPH--hemoprotein reductase] + H2O + H(+). The catalysed reaction is (5Z,8Z,11Z,14Z,17Z)-eicosapentaenoate + reduced [NADPH--hemoprotein reductase] + O2 = 14,15-epoxy-(5Z,8Z,11Z,17Z)-eicosatetraenoate + oxidized [NADPH--hemoprotein reductase] + H2O + H(+). It carries out the reaction (5Z,8Z,11Z,14Z,17Z)-eicosapentaenoate + reduced [NADPH--hemoprotein reductase] + O2 = (17S,18R)-epoxy-(5Z,8Z,11Z,14Z)-eicosatetraenoate + oxidized [NADPH--hemoprotein reductase] + H2O + H(+). The enzyme catalyses (5Z,8Z,11Z,14Z,17Z)-eicosapentaenoate + reduced [NADPH--hemoprotein reductase] + O2 = (17R,18S)-epoxy-(5Z,8Z,11Z,14Z)-eicosatetraenoate + oxidized [NADPH--hemoprotein reductase] + H2O + H(+). The protein operates within lipid metabolism; arachidonate metabolism. Its pathway is steroid metabolism. Its function is as follows. A cytochrome P450 monooxygenase involved in the metabolism of steroid hormones and fatty acids. Catalyzes the hydroxylation of carbon-hydrogen bonds. Metabolizes testosterone to 2alpha- and 16alpha-hydroxytestosterone. Catalyzes the epoxidation of double bonds of polyunsaturated fatty acids (PUFAs). Converts arachidonic acid (ARA, C20:4(n-6)) primarily to epoxyeicosatrienoic acid (EET) regioisomers, 8,9-, 11,12-, and 14,15-EET, with both R,S and S,R stereochemistry. Preferentially produces 11R,12S-EET enantiomer. To a lesser extent, catalyzes the hydroxylation of arachidonic acid producing hydroxyeicosatetraenoates (HETEs). Metabolizes eicosapentaenoic acid (EPA, C20:5(n-3)) to epoxyeicosatetraenoic acid (EETeTr) regioisomers, 8,9-, 11,12-, 14,15-, and 17,18-EETeTr, preferentially producing 17R,18S-EETeTr enantiomer. Mechanistically, uses molecular oxygen inserting one oxygen atom into a substrate, and reducing the second into a water molecule, with two electrons provided by NADPH via cytochrome P450 reductase (NADPH--hemoprotein reductase). This Rattus norvegicus (Rat) protein is Cytochrome P450 2C11 (Cyp2c11).